We begin with the raw amino-acid sequence, 178 residues long: NADH-quinone oxidoreductase subunit B (178 aa).

4 residues coordinate [4Fe-4S] cluster: C45, C46, C111, and C140.

Belongs to the complex I 20 kDa subunit family. In terms of assembly, NDH-1 is composed of 15 different subunits. Subunits NuoB, C, D, E, F, and G constitute the peripheral sector of the complex. It depends on [4Fe-4S] cluster as a cofactor.

It is found in the cell membrane. The enzyme catalyses a quinone + NADH + 5 H(+)(in) = a quinol + NAD(+) + 4 H(+)(out). In terms of biological role, NDH-1 shuttles electrons from NADH, via FMN and iron-sulfur (Fe-S) centers, to quinones in the respiratory chain. The immediate electron acceptor for the enzyme in this species is believed to be a menaquinone. Couples the redox reaction to proton translocation (for every two electrons transferred, four hydrogen ions are translocated across the cytoplasmic membrane), and thus conserves the redox energy in a proton gradient. The protein is NADH-quinone oxidoreductase subunit B of Deinococcus deserti (strain DSM 17065 / CIP 109153 / LMG 22923 / VCD115).